A 250-amino-acid chain; its full sequence is 3-deoxy-manno-octulosonate cytidylyltransferase (250 aa).

Belongs to the KdsB family.

Its subcellular location is the cytoplasm. The enzyme catalyses 3-deoxy-alpha-D-manno-oct-2-ulosonate + CTP = CMP-3-deoxy-beta-D-manno-octulosonate + diphosphate. It participates in nucleotide-sugar biosynthesis; CMP-3-deoxy-D-manno-octulosonate biosynthesis; CMP-3-deoxy-D-manno-octulosonate from 3-deoxy-D-manno-octulosonate and CTP: step 1/1. It functions in the pathway bacterial outer membrane biogenesis; lipopolysaccharide biosynthesis. In terms of biological role, activates KDO (a required 8-carbon sugar) for incorporation into bacterial lipopolysaccharide in Gram-negative bacteria. This is 3-deoxy-manno-octulosonate cytidylyltransferase from Azorhizobium caulinodans (strain ATCC 43989 / DSM 5975 / JCM 20966 / LMG 6465 / NBRC 14845 / NCIMB 13405 / ORS 571).